Here is a 300-residue protein sequence, read N- to C-terminus: tRNA pseudouridine synthase B (300 aa).

D38 functions as the Nucleophile in the catalytic mechanism.

This sequence belongs to the pseudouridine synthase TruB family. Type 1 subfamily.

The catalysed reaction is uridine(55) in tRNA = pseudouridine(55) in tRNA. Functionally, responsible for synthesis of pseudouridine from uracil-55 in the psi GC loop of transfer RNAs. The protein is tRNA pseudouridine synthase B of Dehalococcoides mccartyi (strain ATCC BAA-2266 / KCTC 15142 / 195) (Dehalococcoides ethenogenes (strain 195)).